Reading from the N-terminus, the 1850-residue chain is Vitellogenin-2 (1850 aa).

The N-terminal stretch at 1–15 is a signal peptide; sequence MRGIILALVLTLVGS. Residues 24–662 enclose the Vitellogenin domain; the sequence is FNSRRSYLYN…SPRTMFPSAI (639 aa). N-linked (GlcNAc...) asparagine glycosylation is present at Asn-604. The segment at 935–984 is disordered; the sequence is DAPLDVTEEPFQTSERASREHFAMQGPDSMPRKQSHSSREDLRRSTGKRA. Asn-1094 carries N-linked (GlcNAc...) asparagine glycosylation. Disordered stretches follow at residues 1115–1313 and 1338–1362; these read GTEP…SSSS and EFPK…SHDT. Residues 1122-1143 are compositionally biased toward low complexity; the sequence is TSSSSSSASSTATSSSSSSASS. The segment covering 1156–1165 has biased composition (basic and acidic residues); it reads DQVKQARNKD. The segment covering 1167–1266 has biased composition (low complexity); it reads SSSSRSSKSS…SRSSSSSSKS (100 aa). 2 N-linked (GlcNAc...) asparagine glycosylation sites follow: Asn-1177 and Asn-1188. Residues 1267–1277 show a composition bias toward basic residues; the sequence is SSHHSHSHHSG. Residues 1278 to 1291 show a composition bias toward low complexity; the sequence is HLNGSSSSSSSSRS. N-linked (GlcNAc...) asparagine glycosylation occurs at Asn-1280. Residues 1338-1350 show a composition bias toward basic and acidic residues; the sequence is EFPKRKLPGDRAT. Residues Asn-1417, Asn-1597, and Asn-1665 are each glycosylated (N-linked (GlcNAc...) asparagine). The VWFD domain occupies 1579–1756; sequence ARCSVSYNKI…SWILEEAPCR (178 aa). Cystine bridges form between Cys-1581–Cys-1719 and Cys-1604–Cys-1755.

Phosvitin, an egg yolk storage protein, is one of the most highly phosphorylated (10%) proteins in nature. In terms of processing, cathepsin D is responsible for intraoocytic processing of vitellogenin. Post-translationally, may contain intrachain disulfide bonds. After incorporation from serum via a specific receptor, it is cleaved into four fragments, heavy and light chain lipovitellins, phosphovitin and YGP40, and YGP40 is released into the yolk plasma before or during compartmentation of lipovitellin-phosvitin complex into the yolk granule.

Functionally, precursor of the major egg-yolk proteins that are sources of nutrients during early development of oviparous organisms. In terms of biological role, phosvitin is believed to be of importance in sequestering calcium, iron and other cations for the developing embryo. The sequence is that of Vitellogenin-2 (VTG2) from Gallus gallus (Chicken).